The primary structure comprises 193 residues: dTTP/UTP pyrophosphatase (193 aa).

Aspartate 71 serves as the catalytic Proton acceptor.

This sequence belongs to the Maf family. YhdE subfamily. A divalent metal cation serves as cofactor.

The protein resides in the cytoplasm. The enzyme catalyses dTTP + H2O = dTMP + diphosphate + H(+). The catalysed reaction is UTP + H2O = UMP + diphosphate + H(+). In terms of biological role, nucleoside triphosphate pyrophosphatase that hydrolyzes dTTP and UTP. May have a dual role in cell division arrest and in preventing the incorporation of modified nucleotides into cellular nucleic acids. The protein is dTTP/UTP pyrophosphatase of Dictyoglomus turgidum (strain DSM 6724 / Z-1310).